The following is a 467-amino-acid chain: Fumarate hydratase class II (467 aa).

Residues 98–100 (SGT), Arg126, 129–132 (HPND), 139–141 (SSN), and Thr187 contribute to the substrate site. The Proton donor/acceptor role is filled by His188. Ser318 is a catalytic residue. Residues Ser319 and 324 to 326 (KVN) contribute to the substrate site.

The protein belongs to the class-II fumarase/aspartase family. Fumarase subfamily. In terms of assembly, homotetramer.

It is found in the cytoplasm. The enzyme catalyses (S)-malate = fumarate + H2O. It functions in the pathway carbohydrate metabolism; tricarboxylic acid cycle; (S)-malate from fumarate: step 1/1. Involved in the TCA cycle. Catalyzes the stereospecific interconversion of fumarate to L-malate. This Shigella flexneri protein is Fumarate hydratase class II.